The sequence spans 329 residues: Elongation factor Ts (329 aa).

The interval 79-82 (TDFV) is involved in Mg(2+) ion dislocation from EF-Tu.

The protein belongs to the EF-Ts family.

The protein localises to the cytoplasm. In terms of biological role, associates with the EF-Tu.GDP complex and induces the exchange of GDP to GTP. It remains bound to the aminoacyl-tRNA.EF-Tu.GTP complex up to the GTP hydrolysis stage on the ribosome. This chain is Elongation factor Ts, found in Phocaeicola vulgatus (strain ATCC 8482 / DSM 1447 / JCM 5826 / CCUG 4940 / NBRC 14291 / NCTC 11154) (Bacteroides vulgatus).